Consider the following 214-residue polypeptide: Ribonuclease T (214 aa).

Residues 20–195 (VVVDVETAGF…YDTQKTAELF (176 aa)) enclose the Exonuclease domain. Residues aspartate 23, glutamate 25, histidine 182, and aspartate 187 each contribute to the Mg(2+) site. Residue histidine 182 is the Proton donor/acceptor of the active site.

It belongs to the RNase T family. As to quaternary structure, homodimer. It depends on Mg(2+) as a cofactor.

Trims short 3' overhangs of a variety of RNA species, leaving a one or two nucleotide 3' overhang. Responsible for the end-turnover of tRNA: specifically removes the terminal AMP residue from uncharged tRNA (tRNA-C-C-A). Also appears to be involved in tRNA biosynthesis. The polypeptide is Ribonuclease T (Vibrio parahaemolyticus serotype O3:K6 (strain RIMD 2210633)).